The primary structure comprises 118 residues: Large ribosomal subunit protein uL18 (118 aa).

Residues 1–20 (MISKPDKNKKRQRRHARVRS) form a disordered region. A compositionally biased stretch (basic residues) spans 7–20 (KNKKRQRRHARVRS).

The protein belongs to the universal ribosomal protein uL18 family. Part of the 50S ribosomal subunit; part of the 5S rRNA/L5/L18/L25 subcomplex. Contacts the 5S and 23S rRNAs.

Its function is as follows. This is one of the proteins that bind and probably mediate the attachment of the 5S RNA into the large ribosomal subunit, where it forms part of the central protuberance. The chain is Large ribosomal subunit protein uL18 from Pediococcus pentosaceus (strain ATCC 25745 / CCUG 21536 / LMG 10740 / 183-1w).